We begin with the raw amino-acid sequence, 174 residues long: Large ribosomal subunit protein uL13 (174 aa).

2 disordered regions span residues 1-22 and 153-174; these read MAFPDTDVSPPRGGPSSPAKSP and GETHPHSAQKPQVLKTQPLEVK.

It belongs to the universal ribosomal protein uL13 family. As to quaternary structure, part of the 50S ribosomal subunit. Contacts proteins L3 and L20.

Its function is as follows. This protein is one of the early assembly proteins of the 50S ribosomal subunit. Binds to the 23S rRNA. The protein is Large ribosomal subunit protein uL13 (rplM) of Deinococcus radiodurans (strain ATCC 13939 / DSM 20539 / JCM 16871 / CCUG 27074 / LMG 4051 / NBRC 15346 / NCIMB 9279 / VKM B-1422 / R1).